We begin with the raw amino-acid sequence, 1084 residues long: Probable sucrose-phosphate synthase 1 (1084 aa).

The segment covering 25-46 (GGGGGGGGGGGGGGGGGGGGGV) has biased composition (gly residues). Positions 25–61 (GGGGGGGGGGGGGGGGGGGGGVDPRSPAAGAASPRGP) are disordered. Residues 48 to 61 (PRSPAAGAASPRGP) show a composition bias toward low complexity.

Belongs to the glycosyltransferase 1 family. In terms of assembly, homodimer or homotetramer. As to expression, expressed in leaves mesophyll cells, scutellum of germinating seedlings and pollen of immature inflorescences.

It catalyses the reaction beta-D-fructose 6-phosphate + UDP-alpha-D-glucose = sucrose 6(F)-phosphate + UDP + H(+). Its pathway is glycan biosynthesis; sucrose biosynthesis; sucrose from D-fructose 6-phosphate and UDP-alpha-D-glucose: step 1/2. Its activity is regulated as follows. Activity is regulated by phosphorylation and moderated by concentration of metabolites and light. In terms of biological role, plays a role in photosynthetic sucrose synthesis by catalyzing the rate-limiting step of sucrose biosynthesis from UDP-glucose and fructose- 6-phosphate. Involved in the regulation of carbon partitioning in the leaves of plants. May regulate the synthesis of sucrose and therefore play a major role as a limiting factor in the export of photoassimilates out of the leaf. Plays a role for sucrose availability that is essential for plant growth and fiber elongation. The protein is Probable sucrose-phosphate synthase 1 (SPS1) of Oryza sativa subsp. indica (Rice).